We begin with the raw amino-acid sequence, 61 residues long: Large ribosomal subunit protein uL30 (61 aa).

This sequence belongs to the universal ribosomal protein uL30 family. Part of the 50S ribosomal subunit.

The protein is Large ribosomal subunit protein uL30 of Latilactobacillus sakei subsp. sakei (strain 23K) (Lactobacillus sakei subsp. sakei).